A 118-amino-acid chain; its full sequence is Large ribosomal subunit protein bL20 (118 aa).

This sequence belongs to the bacterial ribosomal protein bL20 family.

Functionally, binds directly to 23S ribosomal RNA and is necessary for the in vitro assembly process of the 50S ribosomal subunit. It is not involved in the protein synthesizing functions of that subunit. This is Large ribosomal subunit protein bL20 from Lactobacillus acidophilus (strain ATCC 700396 / NCK56 / N2 / NCFM).